We begin with the raw amino-acid sequence, 691 residues long: Protein-glutamine gamma-glutamyltransferase E (691 aa).

Y110 carries the phosphotyrosine modification. At T111 the chain carries Phosphothreonine. 4 residues coordinate Ca(2+): A221, N224, N226, and D227. Residue C272 is part of the active site. Residues D301, D303, N305, S307, and D324 each coordinate Ca(2+). Catalysis depends on residues H330 and D353. Positions 393, 414, 442, and 447 each coordinate Ca(2+).

It belongs to the transglutaminase superfamily. Transglutaminase family. As to quaternary structure, consists of two polypeptide chains, which are synthesized as a precursor form of a single polypeptide. It depends on Ca(2+) as a cofactor. Post-translationally, activated by proteolytic processing. In vitro activation is commonly achieved by cleavage with dispase, a neutral bacterial protease. Physiological activation may be catalyzed by CTSL and, to a lesser extent, by CTSS.

The protein localises to the cytoplasm. The catalysed reaction is L-glutaminyl-[protein] + L-lysyl-[protein] = [protein]-L-lysyl-N(6)-5-L-glutamyl-[protein] + NH4(+). Its function is as follows. Catalyzes the calcium-dependent formation of isopeptide cross-links between glutamine and lysine residues in various proteins, as well as the conjugation of polyamines to proteins. Involved in the formation of the cornified envelope (CE), a specialized component consisting of covalent cross-links of proteins beneath the plasma membrane of terminally differentiated keratinocytes. Catalyzes small proline-rich proteins and LOR cross-linking to form small interchain oligomers, which are further cross-linked by TGM1 onto the growing CE scaffold. In hair follicles, involved in cross-linking structural proteins to hardening the inner root sheath. This Bos taurus (Bovine) protein is Protein-glutamine gamma-glutamyltransferase E (TGM3).